The primary structure comprises 434 residues: Glutamine synthetase leaf isozyme, chloroplastic (434 aa).

Disordered stretches follow at residues 1–33 (MQVRRDDDGAGGCAGDAVPGGGEGQDGVPARQP) and 101–126 (TISKPVEDPSELPKWNYDGSSTGQAP). A chloroplast-targeting transit peptide spans 1-54 (MQVRRDDDGAGGCAGDAVPGGGEGQDGVPARQPAGRVWGVSRAARATSGFKVLA). Gly residues predominate over residues 10-25 (AGGCAGDAVPGGGEGQ). One can recognise a GS beta-grasp domain in the interval 81–161 (IIAEYIWVGG…VICDTYTPQG (81 aa)). A GS catalytic domain is found at 168 to 434 (KRHMAAQIFS…LAAKKLALKV (267 aa)).

Belongs to the glutamine synthetase family. Homooctamer.

The protein localises to the plastid. The protein resides in the chloroplast. The enzyme catalyses L-glutamate + NH4(+) + ATP = L-glutamine + ADP + phosphate + H(+). Functionally, the light-modulated chloroplast enzyme, encoded by a nuclear gene and expressed primarily in leaves, is responsible for the reassimilation of the ammonia generated by photorespiration. The protein is Glutamine synthetase leaf isozyme, chloroplastic of Hordeum vulgare (Barley).